The following is a 361-amino-acid chain: Holliday junction branch migration complex subunit RuvB (361 aa).

The interval 1–183 is large ATPase domain (RuvB-L); it reads MAEPSLVAAG…FGFTGHLEFY (183 aa). Residues leucine 22, arginine 23, glycine 64, lysine 67, threonine 68, threonine 69, 130-132, arginine 173, tyrosine 183, and arginine 220 contribute to the ATP site; that span reads EDF. Threonine 68 serves as a coordination point for Mg(2+). The interval 184 to 254 is small ATPAse domain (RuvB-S); it reads SVPELELVLR…SASAALDMYE (71 aa). The segment at 257 to 361 is head domain (RuvB-H); it reads KKGLDRLDRS…VTGEWAPESQ (105 aa). DNA-binding residues include arginine 312 and arginine 317.

This sequence belongs to the RuvB family. As to quaternary structure, homohexamer. Forms an RuvA(8)-RuvB(12)-Holliday junction (HJ) complex. HJ DNA is sandwiched between 2 RuvA tetramers; dsDNA enters through RuvA and exits via RuvB. An RuvB hexamer assembles on each DNA strand where it exits the tetramer. Each RuvB hexamer is contacted by two RuvA subunits (via domain III) on 2 adjacent RuvB subunits; this complex drives branch migration. In the full resolvosome a probable DNA-RuvA(4)-RuvB(12)-RuvC(2) complex forms which resolves the HJ.

The protein localises to the cytoplasm. It catalyses the reaction ATP + H2O = ADP + phosphate + H(+). Its function is as follows. The RuvA-RuvB-RuvC complex processes Holliday junction (HJ) DNA during genetic recombination and DNA repair, while the RuvA-RuvB complex plays an important role in the rescue of blocked DNA replication forks via replication fork reversal (RFR). RuvA specifically binds to HJ cruciform DNA, conferring on it an open structure. The RuvB hexamer acts as an ATP-dependent pump, pulling dsDNA into and through the RuvAB complex. RuvB forms 2 homohexamers on either side of HJ DNA bound by 1 or 2 RuvA tetramers; 4 subunits per hexamer contact DNA at a time. Coordinated motions by a converter formed by DNA-disengaged RuvB subunits stimulates ATP hydrolysis and nucleotide exchange. Immobilization of the converter enables RuvB to convert the ATP-contained energy into a lever motion, pulling 2 nucleotides of DNA out of the RuvA tetramer per ATP hydrolyzed, thus driving DNA branch migration. The RuvB motors rotate together with the DNA substrate, which together with the progressing nucleotide cycle form the mechanistic basis for DNA recombination by continuous HJ branch migration. Branch migration allows RuvC to scan DNA until it finds its consensus sequence, where it cleaves and resolves cruciform DNA. The protein is Holliday junction branch migration complex subunit RuvB of Pseudarthrobacter chlorophenolicus (strain ATCC 700700 / DSM 12829 / CIP 107037 / JCM 12360 / KCTC 9906 / NCIMB 13794 / A6) (Arthrobacter chlorophenolicus).